The chain runs to 389 residues: Chalcone synthase 1 (389 aa).

Residue Cys-164 is part of the active site.

Belongs to the thiolase-like superfamily. Chalcone/stilbene synthases family.

The catalysed reaction is (E)-4-coumaroyl-CoA + 3 malonyl-CoA + 3 H(+) = 2',4,4',6'-tetrahydroxychalcone + 3 CO2 + 4 CoA. The protein operates within secondary metabolite biosynthesis; flavonoid biosynthesis. The primary product of this enzyme is 4,2',4',6'-tetrahydroxychalcone (also termed naringenin-chalcone or chalcone) which can under specific conditions spontaneously isomerize into naringenin. The chain is Chalcone synthase 1 (CHS1) from Medicago sativa (Alfalfa).